We begin with the raw amino-acid sequence, 162 residues long: uncharacterized protein (162 aa).

It localises to the cytoplasm. The protein resides in the nucleus. This is an uncharacterized protein from Schizosaccharomyces pombe (strain 972 / ATCC 24843) (Fission yeast).